The primary structure comprises 141 residues: Large ribosomal subunit protein uL11 (141 aa).

The protein belongs to the universal ribosomal protein uL11 family. As to quaternary structure, part of the ribosomal stalk of the 50S ribosomal subunit. Interacts with L10 and the large rRNA to form the base of the stalk. L10 forms an elongated spine to which L12 dimers bind in a sequential fashion forming a multimeric L10(L12)X complex. One or more lysine residues are methylated.

Forms part of the ribosomal stalk which helps the ribosome interact with GTP-bound translation factors. The chain is Large ribosomal subunit protein uL11 from Chlamydia trachomatis serovar L2 (strain ATCC VR-902B / DSM 19102 / 434/Bu).